We begin with the raw amino-acid sequence, 266 residues long: Putative carbamate hydrolase RutD (266 aa).

The protein belongs to the AB hydrolase superfamily. Hydrolase RutD family.

It carries out the reaction carbamate + 2 H(+) = NH4(+) + CO2. Involved in pyrimidine catabolism. May facilitate the hydrolysis of carbamate, a reaction that can also occur spontaneously. The chain is Putative carbamate hydrolase RutD from Escherichia coli O103:H2 (strain 12009 / EHEC).